Here is a 122-residue protein sequence, read N- to C-terminus: Large ribosomal subunit protein uL14 (122 aa).

The protein belongs to the universal ribosomal protein uL14 family. As to quaternary structure, part of the 50S ribosomal subunit. Forms a cluster with proteins L3 and L19. In the 70S ribosome, L14 and L19 interact and together make contacts with the 16S rRNA in bridges B5 and B8.

In terms of biological role, binds to 23S rRNA. Forms part of two intersubunit bridges in the 70S ribosome. The protein is Large ribosomal subunit protein uL14 of Dehalococcoides mccartyi (strain ATCC BAA-2100 / JCM 16839 / KCTC 5957 / BAV1).